The primary structure comprises 918 residues: UPF0182 protein CPR_0011 (918 aa).

7 helical membrane-spanning segments follow: residues 8–28, 46–66, 91–111, 151–171, 200–220, 243–263, and 271–291; these read TVLI…NFII, LIAI…VIAI, FLLS…TTQW, AISL…ALGF, LAVL…LKSY, IFYK…FISI, and IIIS…VAIF.

It belongs to the UPF0182 family.

It localises to the cell membrane. In Clostridium perfringens (strain SM101 / Type A), this protein is UPF0182 protein CPR_0011.